Consider the following 161-residue polypeptide: uncharacterized protein (161 aa).

Positions 1–29 form a coiled coil; the sequence is MTLYDTVKELQEKLRNGEIEINTFLERLG.

This is an uncharacterized protein from Acidianus convivator (ATV).